A 439-amino-acid polypeptide reads, in one-letter code: Ribosomal protein uS12 methylthiotransferase RimO (439 aa).

The region spanning 7–119 (KQLCLISLGC…IDILIAKKQN (113 aa)) is the MTTase N-terminal domain. Positions 16, 50, 82, 151, 155, and 158 each coordinate [4Fe-4S] cluster. A Radical SAM core domain is found at 137-368 (TGSSVHAYVK…ALKHQNHSFK (232 aa)).

The protein belongs to the methylthiotransferase family. RimO subfamily. Requires [4Fe-4S] cluster as cofactor.

It localises to the cytoplasm. It catalyses the reaction L-aspartate(89)-[ribosomal protein uS12]-hydrogen + (sulfur carrier)-SH + AH2 + 2 S-adenosyl-L-methionine = 3-methylsulfanyl-L-aspartate(89)-[ribosomal protein uS12]-hydrogen + (sulfur carrier)-H + 5'-deoxyadenosine + L-methionine + A + S-adenosyl-L-homocysteine + 2 H(+). In terms of biological role, catalyzes the methylthiolation of an aspartic acid residue of ribosomal protein uS12. This is Ribosomal protein uS12 methylthiotransferase RimO from Helicobacter pylori (strain J99 / ATCC 700824) (Campylobacter pylori J99).